The primary structure comprises 265 residues: Taurine import ATP-binding protein TauB (265 aa).

Positions 7 to 236 constitute an ABC transporter domain; the sequence is QNLNMIFKTP…MGIDGDLREI (230 aa). Residue 41 to 48 participates in ATP binding; the sequence is GPSGCGKT.

Belongs to the ABC transporter superfamily. Taurine importer (TC 3.A.1.17.1) family. The complex is composed of two ATP-binding proteins (TauB), two transmembrane proteins (TauC) and a solute-binding protein (TauA).

It localises to the cell inner membrane. It carries out the reaction taurine(out) + ATP + H2O = taurine(in) + ADP + phosphate + H(+). Functionally, part of the ABC transporter complex TauABC involved in taurine import. Responsible for energy coupling to the transport system. This chain is Taurine import ATP-binding protein TauB, found in Pelagibacter ubique (strain HTCC1062).